Consider the following 96-residue polypeptide: UPF0235 protein YggU (96 aa).

The protein belongs to the UPF0235 family.

This is UPF0235 protein YggU from Shigella flexneri.